A 290-amino-acid chain; its full sequence is Acetyl-coenzyme A carboxylase carboxyl transferase subunit beta (290 aa).

A CoA carboxyltransferase N-terminal domain is found at 30–290; that stretch reads IMTKCPKCKK…HAGQEVNKDA (261 aa). The Zn(2+) site is built by Cys34, Cys37, Cys53, and Cys56. Residues 34-56 form a C4-type zinc finger; that stretch reads CPKCKKIMYTKELSENLNVCFNC.

Belongs to the AccD/PCCB family. In terms of assembly, acetyl-CoA carboxylase is a heterohexamer composed of biotin carboxyl carrier protein (AccB), biotin carboxylase (AccC) and two subunits each of ACCase subunit alpha (AccA) and ACCase subunit beta (AccD). Zn(2+) serves as cofactor.

The protein localises to the cytoplasm. It carries out the reaction N(6)-carboxybiotinyl-L-lysyl-[protein] + acetyl-CoA = N(6)-biotinyl-L-lysyl-[protein] + malonyl-CoA. It participates in lipid metabolism; malonyl-CoA biosynthesis; malonyl-CoA from acetyl-CoA: step 1/1. Functionally, component of the acetyl coenzyme A carboxylase (ACC) complex. Biotin carboxylase (BC) catalyzes the carboxylation of biotin on its carrier protein (BCCP) and then the CO(2) group is transferred by the transcarboxylase to acetyl-CoA to form malonyl-CoA. In Staphylococcus carnosus (strain TM300), this protein is Acetyl-coenzyme A carboxylase carboxyl transferase subunit beta.